Consider the following 175-residue polypeptide: Ferritin light chain (175 aa).

Serine 2 carries the post-translational modification N-acetylserine. The 150-residue stretch at 7–156 folds into the Ferritin-like diiron domain; that stretch reads QNYSTEVEAA…DHLTNLRRLA (150 aa). Glutamate 54, glutamate 58, glutamate 61, and glutamate 64 together coordinate Fe cation.

This sequence belongs to the ferritin family. In terms of assembly, oligomer of 24 subunits. There are two types of subunits: L (light) chain and H (heavy) chain. The major chain can be light or heavy, depending on the species and tissue type. The functional molecule forms a roughly spherical shell with a diameter of 12 nm and contains a central cavity into which the insoluble mineral iron core is deposited. Interacts with NCOA4.

It is found in the cytoplasmic vesicle. Its subcellular location is the autophagosome. The protein resides in the cytoplasm. The protein localises to the autolysosome. In terms of biological role, stores iron in a soluble, non-toxic, readily available form. Important for iron homeostasis. Iron is taken up in the ferrous form and deposited as ferric hydroxides after oxidation. Also plays a role in delivery of iron to cells. Mediates iron uptake in capsule cells of the developing kidney. Delivery to lysosomes by the cargo receptor NCOA4 for autophagic degradation and release or iron. The polypeptide is Ferritin light chain (FTL) (Bos taurus (Bovine)).